The chain runs to 520 residues: Maturase K (520 aa).

Belongs to the intron maturase 2 family. MatK subfamily.

It is found in the plastid. The protein resides in the chloroplast. In terms of biological role, usually encoded in the trnK tRNA gene intron. Probably assists in splicing its own and other chloroplast group II introns. This is Maturase K from Iris cristata (Dwarf crested iris).